We begin with the raw amino-acid sequence, 344 residues long: Putative esterase NocK (344 aa).

The segment at residues 1-34 (MIGVTRRSGLALAVLVSSAACAGAEPVAPPPAPA) is a signal peptide (tat-type signal). Residues 265 to 295 (GGADERRREEARPAAAPGGTSTSRETCANPD) are disordered. Positions 266–276 (GADERRREEAR) are enriched in basic and acidic residues.

This sequence belongs to the AB hydrolase superfamily. Post-translationally, predicted to be exported by the Tat system. The position of the signal peptide cleavage has not been experimentally proven.

The protein is Putative esterase NocK of Nocardia uniformis subsp. tsuyamanensis.